Here is an 83-residue protein sequence, read N- to C-terminus: U-actitoxin-Aeq6b (83 aa).

A signal peptide spans 1-20 (MIYKAVFVCLVLVLLGDVFC). The propeptide occupies 21-36 (SPRNSGGGTLNDNPFE). Proline 82 bears the Proline amide mark.

Post-translationally, contains 3 disulfide bonds. In terms of tissue distribution, expressed by acrorhagi.

The protein resides in the secreted. It is found in the nematocyst. Toxin. The sequence is that of U-actitoxin-Aeq6b from Actinia equina (Beadlet anemone).